Here is a 66-residue protein sequence, read N- to C-terminus: Large ribosomal subunit protein uL29 (66 aa).

Belongs to the universal ribosomal protein uL29 family.

The chain is Large ribosomal subunit protein uL29 from Helicobacter pylori (strain HPAG1).